Consider the following 562-residue polypeptide: Dihydroxy-acid dehydratase (562 aa).

Mg(2+) is bound at residue aspartate 78. Cysteine 119 is a binding site for [2Fe-2S] cluster. Residues aspartate 120 and lysine 121 each contribute to the Mg(2+) site. At lysine 121 the chain carries N6-carboxylysine. [2Fe-2S] cluster is bound at residue cysteine 192. Glutamate 449 is a binding site for Mg(2+). Residue serine 475 is the Proton acceptor of the active site.

This sequence belongs to the IlvD/Edd family. In terms of assembly, homodimer. Requires [2Fe-2S] cluster as cofactor. Mg(2+) is required as a cofactor.

It catalyses the reaction (2R)-2,3-dihydroxy-3-methylbutanoate = 3-methyl-2-oxobutanoate + H2O. It carries out the reaction (2R,3R)-2,3-dihydroxy-3-methylpentanoate = (S)-3-methyl-2-oxopentanoate + H2O. The protein operates within amino-acid biosynthesis; L-isoleucine biosynthesis; L-isoleucine from 2-oxobutanoate: step 3/4. Its pathway is amino-acid biosynthesis; L-valine biosynthesis; L-valine from pyruvate: step 3/4. Functions in the biosynthesis of branched-chain amino acids. Catalyzes the dehydration of (2R,3R)-2,3-dihydroxy-3-methylpentanoate (2,3-dihydroxy-3-methylvalerate) into 2-oxo-3-methylpentanoate (2-oxo-3-methylvalerate) and of (2R)-2,3-dihydroxy-3-methylbutanoate (2,3-dihydroxyisovalerate) into 2-oxo-3-methylbutanoate (2-oxoisovalerate), the penultimate precursor to L-isoleucine and L-valine, respectively. This is Dihydroxy-acid dehydratase from Aliarcobacter butzleri (strain RM4018) (Arcobacter butzleri).